The following is a 197-amino-acid chain: Thymidylate kinase (197 aa).

Residue 7 to 14 (GIDGSGKS) coordinates ATP.

The protein belongs to the thymidylate kinase family.

The enzyme catalyses dTMP + ATP = dTDP + ADP. Functionally, phosphorylation of dTMP to form dTDP in both de novo and salvage pathways of dTTP synthesis. This chain is Thymidylate kinase, found in Thermotoga sp. (strain RQ2).